Here is a 440-residue protein sequence, read N- to C-terminus: Amino acid transporter AVT6D (440 aa).

A run of 11 helical transmembrane segments spans residues 26 to 46 (FAGA…MAIP), 47 to 67 (AAFK…IAWL), 102 to 122 (AVTV…SIII), 149 to 169 (WNTR…PLVL), 182 to 202 (ISFL…IIAL), 219 to 239 (GGLS…AFTF), 262 to 282 (ISVI…YLLF), 309 to 329 (IVRL…NFSL), 356 to 376 (FPLL…WYFF), 377 to 397 (QFLG…AIVL), and 410 to 430 (IVAS…ISTN).

Belongs to the amino acid/polyamine transporter 2 family. Amino acid/auxin permease (AAAP) (TC 2.A.18.6) subfamily.

The protein resides in the membrane. This chain is Amino acid transporter AVT6D, found in Arabidopsis thaliana (Mouse-ear cress).